The primary structure comprises 563 residues: Zinc finger protein 503 (563 aa).

Polar residues predominate over residues 1–10 (MITSPSASRN). Disordered regions lie at residues 1–48 (MITS…PLRQ) and 101–226 (SQIG…TSVS). Composition is skewed to low complexity over residues 19 to 33 (SSSSSSRNNSSAVAS) and 112 to 122 (SKLSSVTSNGS). The segment covering 174–194 (ATCQPFTPRTGSPNSSTSASP) has biased composition (polar residues). Basic and acidic residues predominate over residues 199-211 (GKGERDEKKDSDC). Residues 212–226 (NKNCSSDGSAPTSVS) show a composition bias toward polar residues. Residues 431-459 (HVCNWVSANGPCDKRFSSSEELLNHLRTH) form a C2H2-type zinc finger.

It belongs to the Elbow/Noc family. Interacts with nlz1.

It is found in the nucleus. In terms of biological role, required for segmental gene expression during hindbrain development. May function as a transcriptional repressor. The protein is Zinc finger protein 503 (znf503) of Danio rerio (Zebrafish).